Consider the following 208-residue polypeptide: V-type ATP synthase subunit D (208 aa).

Belongs to the V-ATPase D subunit family.

In terms of biological role, produces ATP from ADP in the presence of a proton gradient across the membrane. The chain is V-type ATP synthase subunit D from Chlamydia caviae (strain ATCC VR-813 / DSM 19441 / 03DC25 / GPIC) (Chlamydophila caviae).